Consider the following 458-residue polypeptide: UDP-N-acetylmuramoylalanine--D-glutamate ligase (458 aa).

G124 to T130 contacts ATP.

Belongs to the MurCDEF family.

The protein localises to the cytoplasm. It carries out the reaction UDP-N-acetyl-alpha-D-muramoyl-L-alanine + D-glutamate + ATP = UDP-N-acetyl-alpha-D-muramoyl-L-alanyl-D-glutamate + ADP + phosphate + H(+). Its pathway is cell wall biogenesis; peptidoglycan biosynthesis. Its function is as follows. Cell wall formation. Catalyzes the addition of glutamate to the nucleotide precursor UDP-N-acetylmuramoyl-L-alanine (UMA). This Clostridium botulinum (strain Okra / Type B1) protein is UDP-N-acetylmuramoylalanine--D-glutamate ligase.